The chain runs to 908 residues: Transcriptional repressor ILP1 (908 aa).

2 disordered regions span residues 1–113 (MGSN…PQAG) and 238–277 (VGPR…EEDK). The segment covering 25–47 (ATPSSKPTSTLSSSKPKTLSASA) has biased composition (low complexity). The stretch at 426–453 (MQNKGSLIEEIEDQMKELNEKHALSILE) forms a coiled coil. The segment covering 513-530 (EFGRDENLQKRREVEQRA) has biased composition (basic and acidic residues). The disordered stretch occupies residues 513 to 574 (EFGRDENLQK…ESDTETSAYK (62 aa)).

This sequence belongs to the GCF family. As to quaternary structure, interacts with STIPL1/NTR1.

Its subcellular location is the nucleus. In terms of biological role, transcriptional repressor regulating endoreduplication through control of A-type cyclins expression. Does not bind to promoter sequences (in vitro) and may act by interacting with tissue-specific transcription factors. Enhances the endocycle in endoreduplicating cells in seedlings. Required for efficient splicing. The chain is Transcriptional repressor ILP1 from Arabidopsis thaliana (Mouse-ear cress).